The primary structure comprises 298 residues: Probable deoxyhypusine synthase 2 (298 aa).

Residue Lys-259 is the Nucleophile of the active site.

Belongs to the deoxyhypusine synthase family. NAD(+) serves as cofactor.

The catalysed reaction is [eIF5A protein]-L-lysine + spermidine = [eIF5A protein]-deoxyhypusine + propane-1,3-diamine. The protein operates within protein modification; eIF5A hypusination. Its function is as follows. Catalyzes the NAD-dependent oxidative cleavage of spermidine and the subsequent transfer of the butylamine moiety of spermidine to the epsilon-amino group of a specific lysine residue of the eIF-5A precursor protein to form the intermediate deoxyhypusine residue. This is Probable deoxyhypusine synthase 2 (dys2) from Archaeoglobus fulgidus (strain ATCC 49558 / DSM 4304 / JCM 9628 / NBRC 100126 / VC-16).